Consider the following 1370-residue polypeptide: DNA-directed RNA polymerase subunit beta (1370 aa).

This sequence belongs to the RNA polymerase beta chain family. The RNAP catalytic core consists of 2 alpha, 1 beta, 1 beta' and 1 omega subunit. When a sigma factor is associated with the core the holoenzyme is formed, which can initiate transcription.

The catalysed reaction is RNA(n) + a ribonucleoside 5'-triphosphate = RNA(n+1) + diphosphate. DNA-dependent RNA polymerase catalyzes the transcription of DNA into RNA using the four ribonucleoside triphosphates as substrates. This Bordetella pertussis (strain Tohama I / ATCC BAA-589 / NCTC 13251) protein is DNA-directed RNA polymerase subunit beta.